A 305-amino-acid chain; its full sequence is Ribosomal RNA small subunit methyltransferase H (305 aa).

Residues 33 to 35 (GGY), Asp-51, Phe-78, Asp-96, and Gln-103 contribute to the S-adenosyl-L-methionine site.

It belongs to the methyltransferase superfamily. RsmH family.

The protein localises to the cytoplasm. The catalysed reaction is cytidine(1402) in 16S rRNA + S-adenosyl-L-methionine = N(4)-methylcytidine(1402) in 16S rRNA + S-adenosyl-L-homocysteine + H(+). Specifically methylates the N4 position of cytidine in position 1402 (C1402) of 16S rRNA. The sequence is that of Ribosomal RNA small subunit methyltransferase H from Rickettsia bellii (strain RML369-C).